A 193-amino-acid polypeptide reads, in one-letter code: Probable GTP-binding protein EngB (193 aa).

Positions 22–193 (SFPEIVFAGR…LAHFDQYICQ (172 aa)) constitute an EngB-type G domain. Residues 30-37 (GRSNVGKS), 57-61 (GKTRL), 75-78 (DLPG), 142-145 (TKYD), and 172-174 (YSS) each bind GTP. Mg(2+) contacts are provided by S37 and T59.

This sequence belongs to the TRAFAC class TrmE-Era-EngA-EngB-Septin-like GTPase superfamily. EngB GTPase family. It depends on Mg(2+) as a cofactor.

Necessary for normal cell division and for the maintenance of normal septation. In Pelodictyon phaeoclathratiforme (strain DSM 5477 / BU-1), this protein is Probable GTP-binding protein EngB.